Reading from the N-terminus, the 461-residue chain is MAENHKLWGGRFEASLEKWVEEFGASISFDQKMAEFDLKGSIAHVTMLGETGIIAQEEALQIKQGLEELLEEYKAGKLEFDVSNEDIHMNIESLLTAKIGPVAGKLHTARSRNDQVATDMHLYLKAKLVEVIEKIDNLRNTLVSLADKHTYTIMPGYTHLQHAQPISFGHHLMAYYNMFTRDSERFEFNIKHTDISPLGAAALAGTTFPIDRNMTSDLMGFAKPYSNSLDAVSDRDFILEFLSNSSILMMHMTRICEEIINWCSNEFKFVTLSDTFSTGSSIMPQKKNPDMAELIRGKSGRVYGNLIGLLTVMKSLPLAYNKDLQEDKEGMFDTVETITVAIDILAGMLNTMTVNDKHMAESTEKDFSNATELADYLATKGLPFREAHEIVGKLVLECTKAGYYLQDVPLERYQEVSDLIEEDIYETLKSHTAVERRHSLGGTGFDQVKWQIKEAQQSLNK.

The protein belongs to the lyase 1 family. Argininosuccinate lyase subfamily.

The protein localises to the cytoplasm. The catalysed reaction is 2-(N(omega)-L-arginino)succinate = fumarate + L-arginine. It functions in the pathway amino-acid biosynthesis; L-arginine biosynthesis; L-arginine from L-ornithine and carbamoyl phosphate: step 3/3. The protein is Argininosuccinate lyase of Streptococcus thermophilus (strain CNRZ 1066).